We begin with the raw amino-acid sequence, 936 residues long: MVYSRRGSLGSRLLLLWLLLAYWKAGSGQLHYSIPEEAKHGTFVGRIAQDLGLELAELVPRLFRVASKGRGDLLEVNLQNGILFVNSRIDREELCRRRAECSIHLEVIVDRPLQVFHVEVAVKDINDNPPRFSRQEQTLFILESRMPDSRFPLEGASDLDIGANAQLRYRLNPNEYFDLDVKTNEEETNFLELVLRKSLDREETQEHRLLVIATDGGKPELTGTVQLLINVLDANDNAPEFDKSIYNVRLLENAPSGTLVIKLNASDADEGINKEIVYFFSNLVLDDVKSKFIINSNTGEIKVNGELDYEDCNSYEINIDAVDKSTFPLSGHCKVVVKLLDVNDNTPEMAITTLFLPVKEDAPLSTVIALITVSDRDSGANGPVTCSLMPHVPFKLVSTFKNYYSLVLDSALDRESLSVYELVVTARDGGSPSLWATASVSVEVADVNDTLRAFAQPQYTVFVKENNPPGCHIFTVSARDADAQENALVSYSLVERRVGERPLSSYVSVHAESGKVYALQPLDHEEVELLQFQVSARDAGVPPLGSNVTLQVFVLDENDNAPALLAPRVGGTGGAVSELVPRSVGAGHVVAKVRAVDPDSGYNAWLSYELQPAPGSARIPFRVGLYTGEISTTRSLDETEAPRHRLLVLVKDHGEPPLTATATVLVSLVESGQAPKASSRASAGAVGPEAALVDVNVYLIIAICAVSSLLVLTLLLYTALRCSAQPTEAVCTRGKPTLVCSSAVGSWSYSQQRRQRVCSGEAPPKTDLMAFSPSLPQGPTSTDNPRQPNPDWRYSASLRAGMHSSVHLEEAGILRAGPGGPDQQWPTVSSATPEPEAGEVSPPVGAGVNSNSWTFKYGPGNPKQSGPGELPDKFIIPGSPAIISIRQEPANSQIDKSDFITFGKKEETKKKKKKKKGNKTQEKKEKGNSTTDNSDQ.

The first 28 residues, 1–28, serve as a signal peptide directing secretion; that stretch reads MVYSRRGSLGSRLLLLWLLLAYWKAGSG. At 29–696 the chain is on the extracellular side; the sequence is QLHYSIPEEA…GPEAALVDVN (668 aa). 6 Cadherin domains span residues 33-132, 156-241, 242-349, 350-454, 455-564, and 580-677; these read SIPE…PPRF, ASDL…APEF, DKSI…TPEM, AITT…LRAF, AQPQ…APAL, and VPRS…APKA. Residues Asn264, Asn448, and Asn547 are each glycosylated (N-linked (GlcNAc...) asparagine). Residues 697 to 717 traverse the membrane as a helical segment; it reads VYLIIAICAVSSLLVLTLLLY. The Cytoplasmic portion of the chain corresponds to 718–936; sequence TALRCSAQPT…GNSTTDNSDQ (219 aa). 3 disordered regions span residues 759-793, 815-875, and 887-936; these read SGEAPPKTDLMAFSPSLPQGPTSTDNPRQPNPDWR, RAGP…DKFI, and QEPA…NSDQ. PXXP repeat units follow at residues 773-776, 785-788, 818-821, 873-876, and 877-890; these read PSLP, PRQP, PGGP, KFII, and PGSPAIISIRQEPA. The segment at 773–890 is 5 X 4 AA repeats of P-X-X-P; the sequence is PSLPQGPTST…AIISIRQEPA (118 aa). A compositionally biased stretch (polar residues) spans 774 to 786; sequence SLPQGPTSTDNPR. Basic and acidic residues predominate over residues 895–909; the sequence is DKSDFITFGKKEETK.

It localises to the cell membrane. Potential calcium-dependent cell-adhesion protein. May be involved in the establishment and maintenance of specific neuronal connections in the brain. This chain is Protocadherin alpha-5 (PCDHA5), found in Pan troglodytes (Chimpanzee).